The sequence spans 519 residues: Probable anion transporter 3, chloroplastic (519 aa).

The N-terminal 76 residues, 1–76, are a transit peptide targeting the chloroplast; it reads MAPPGQLLPL…PPPPATSLPG (76 aa). Positions 56–72 are enriched in pro residues; that stretch reads LPFAPPRRLSRPPPPAT. A disordered region spans residues 56 to 82; it reads LPFAPPRRLSRPPPPATSLPGASPGGG. The next 12 helical transmembrane spans lie at 100–120, 138–158, 166–186, 188–208, 229–249, 253–273, 326–346, 362–382, 403–423, 424–444, 460–480, and 488–508; these read VAAM…VMSV, VVQS…GALV, VMAY…WAAA, SLWL…VALP, IAMA…PIIM, GIFG…LVWI, WALI…LSWM, AWFS…AGVV, IGFV…SPVI, ASAW…GFLV, MSNT…GFFV, and GFLI…DIFA.

It belongs to the major facilitator superfamily. Sodium/anion cotransporter (TC 2.A.1.14) family.

It is found in the plastid. The protein localises to the chloroplast membrane. Functionally, probable anion transporter. The sequence is that of Probable anion transporter 3, chloroplastic (PHT4;3) from Oryza sativa subsp. japonica (Rice).